A 332-amino-acid chain; its full sequence is Tetraacyldisaccharide 4'-kinase (332 aa).

Residue Ser-53–Thr-60 coordinates ATP.

This sequence belongs to the LpxK family.

It carries out the reaction a lipid A disaccharide + ATP = a lipid IVA + ADP + H(+). It functions in the pathway glycolipid biosynthesis; lipid IV(A) biosynthesis; lipid IV(A) from (3R)-3-hydroxytetradecanoyl-[acyl-carrier-protein] and UDP-N-acetyl-alpha-D-glucosamine: step 6/6. Functionally, transfers the gamma-phosphate of ATP to the 4'-position of a tetraacyldisaccharide 1-phosphate intermediate (termed DS-1-P) to form tetraacyldisaccharide 1,4'-bis-phosphate (lipid IVA). The polypeptide is Tetraacyldisaccharide 4'-kinase (Haemophilus influenzae (strain 86-028NP)).